We begin with the raw amino-acid sequence, 273 residues long: Large ribosomal subunit protein uL2cz/uL2cy (273 aa).

Disordered regions lie at residues 1-23 and 224-273; these read MAIHLYKTSTPSTRNGAVDSQVK and NPVD…RRRK.

This sequence belongs to the universal ribosomal protein uL2 family. As to quaternary structure, part of the 50S ribosomal subunit.

Its subcellular location is the plastid. The protein localises to the chloroplast. This is Large ribosomal subunit protein uL2cz/uL2cy (rpl2-A) from Amborella trichopoda.